The following is a 199-amino-acid chain: Superoxide dismutase [Mn/Fe] (199 aa).

Fe(3+) contacts are provided by H27, H81, D161, and H165. 4 residues coordinate Mn(2+): H27, H81, D161, and H165.

It belongs to the iron/manganese superoxide dismutase family. In terms of assembly, homodimer. Requires Mn(2+) as cofactor. Fe(3+) serves as cofactor.

It carries out the reaction 2 superoxide + 2 H(+) = H2O2 + O2. Functionally, destroys superoxide anion radicals which are normally produced within the cells and which are toxic to biological systems. Catalyzes the dismutation of superoxide anion radicals into O2 and H2O2 by successive reduction and oxidation of the transition metal ion at the active site. This is Superoxide dismutase [Mn/Fe] (sodA) from Staphylococcus epidermidis.